The sequence spans 186 residues: UPF0200 protein PF1294 (186 aa).

Residue 7-14 (GMPGSGKG) participates in ATP binding.

Belongs to the UPF0200 family.

The polypeptide is UPF0200 protein PF1294 (Pyrococcus furiosus (strain ATCC 43587 / DSM 3638 / JCM 8422 / Vc1)).